The chain runs to 101 residues: NAD(P)H-quinone oxidoreductase subunit 4L, chloroplastic (101 aa).

Helical transmembrane passes span 2-22 (LLEH…YGLI), 32-52 (MCLE…SDFF), and 61-81 (IFSI…SAIV).

The protein belongs to the complex I subunit 4L family. As to quaternary structure, NDH is composed of at least 16 different subunits, 5 of which are encoded in the nucleus.

The protein localises to the plastid. It localises to the chloroplast thylakoid membrane. It catalyses the reaction a plastoquinone + NADH + (n+1) H(+)(in) = a plastoquinol + NAD(+) + n H(+)(out). The catalysed reaction is a plastoquinone + NADPH + (n+1) H(+)(in) = a plastoquinol + NADP(+) + n H(+)(out). NDH shuttles electrons from NAD(P)H:plastoquinone, via FMN and iron-sulfur (Fe-S) centers, to quinones in the photosynthetic chain and possibly in a chloroplast respiratory chain. The immediate electron acceptor for the enzyme in this species is believed to be plastoquinone. Couples the redox reaction to proton translocation, and thus conserves the redox energy in a proton gradient. The protein is NAD(P)H-quinone oxidoreductase subunit 4L, chloroplastic of Carica papaya (Papaya).